Consider the following 312-residue polypeptide: DNA-directed RNA polymerase subunit alpha (312 aa).

Positions 1 to 226 are alpha N-terminal domain (alpha-NTD); the sequence is MIEFEKPIIT…EHLNLFTDLT (226 aa). The alpha C-terminal domain (alpha-CTD) stretch occupies residues 243–312; the sequence is DEKVLDRTIE…DLGLGLKNDK (70 aa).

This sequence belongs to the RNA polymerase alpha chain family. Homodimer. The RNAP catalytic core consists of 2 alpha, 1 beta, 1 beta' and 1 omega subunit. When a sigma factor is associated with the core the holoenzyme is formed, which can initiate transcription.

The enzyme catalyses RNA(n) + a ribonucleoside 5'-triphosphate = RNA(n+1) + diphosphate. Functionally, DNA-dependent RNA polymerase catalyzes the transcription of DNA into RNA using the four ribonucleoside triphosphates as substrates. The sequence is that of DNA-directed RNA polymerase subunit alpha from Streptococcus mutans serotype c (strain ATCC 700610 / UA159).